The primary structure comprises 361 residues: P2Y purinoceptor 4 (361 aa).

The disordered stretch occupies residues 1-20 (MTSAESLLFTSLGPSPSSGD). The Extracellular segment spans residues 1 to 30 (MTSAESLLFTSLGPSPSSGDGDCRFNEEFK). Residues 31–58 (FILLPMSYAVVFVLGLALNAPTLWLFLF) form a helical membrane-spanning segment. Over 59-68 (RLRPWDATAT) the chain is Cytoplasmic. Residues 69–91 (YMFHLALSDTLYVLSLPTLVYYY) form a helical membrane-spanning segment. Topologically, residues 92 to 108 (AARNHWPFGTGLCKFVR) are extracellular. C104 and C181 form a disulfide bridge. The chain crosses the membrane as a helical span at residues 109–127 (FLFYWNLYCSVLFLTCISV). Over 128–149 (HRYLGICHPLRAIRWGRPRFAS) the chain is Cytoplasmic. A helical transmembrane segment spans residues 150–170 (LLCLGVWLVVAGCLVPNLFFV). The Extracellular segment spans residues 171–192 (TTNANGTTILCHDTTLPEEFDH). N175 carries an N-linked (GlcNAc...) asparagine glycan. A helical transmembrane segment spans residues 193–218 (YVYFSSAVMVLLFGLPFLITLVCYGL). Residues 219 to 242 (MARRLYRPLPGAGQSSSRLRSLRT) lie on the Cytoplasmic side of the membrane. The helical transmembrane segment at 243–265 (IAVVLTVFAVCFVPFHITRTIYY) threads the bilayer. The Extracellular segment spans residues 266-283 (QARLLQADCHVLNIVNVV). The helical transmembrane segment at 284–305 (YKVTRPLASANSCLDPVLYLFT) threads the bilayer. At 306–361 (GDKYRNQLQQLCRGSKPKPRTAASSLALVTLHEESISRWADTHQDSTFSAYEGDRL) the chain is on the cytoplasmic side.

It belongs to the G-protein coupled receptor 1 family. Post-translationally, phosphorylation of Ser-329 and Ser-330 is a key step in agonist-dependent desensitization and loss of surface P2RY4. This phosphorylation does not involve PKC, nor other calcium-activated kinases. Widely expressed at low levels. In brain, higher expression in the pineal gland and ventricular system.

The protein localises to the cell membrane. In terms of biological role, receptor for ATP and UTP coupled to G-proteins that activate a phosphatidylinositol-calcium second messenger system. Not activated by ADP or UDP. This is P2Y purinoceptor 4 (P2ry4) from Rattus norvegicus (Rat).